The following is a 72-amino-acid chain: Caerin-regulated peptide (72 aa).

An N-terminal signal peptide occupies residues 1–22; that stretch reads MAFLKKSLLLVLFLGLVSLSIC. A propeptide spanning residues 23 to 43 is cleaved from the precursor; the sequence is DEEKRENEDEEEQEDDEQSEE. Positions 24-46 are disordered; that stretch reads EEKRENEDEEEQEDDEQSEEKRG. The segment covering 30 to 41 has biased composition (acidic residues); it reads EDEEEQEDDEQS.

Expressed by the skin glands.

It localises to the secreted. Its function is as follows. Has antibacterial activity against Gram-positive bacterium M.luteus NCT C2665 and against Gram-negative bacterium E.coli K12D31. This chain is Caerin-regulated peptide, found in Agalychnis callidryas (Red-eyed tree frog).